Here is a 204-residue protein sequence, read N- to C-terminus: Urease accessory protein UreG (204 aa).

Residue 12–19 coordinates GTP; it reads GPVGSGKT.

Belongs to the SIMIBI class G3E GTPase family. UreG subfamily. As to quaternary structure, homodimer. UreD, UreF and UreG form a complex that acts as a GTP-hydrolysis-dependent molecular chaperone, activating the urease apoprotein by helping to assemble the nickel containing metallocenter of UreC. The UreE protein probably delivers the nickel.

It is found in the cytoplasm. Functionally, facilitates the functional incorporation of the urease nickel metallocenter. This process requires GTP hydrolysis, probably effectuated by UreG. The sequence is that of Urease accessory protein UreG from Pseudomonas paraeruginosa (strain DSM 24068 / PA7) (Pseudomonas aeruginosa (strain PA7)).